We begin with the raw amino-acid sequence, 363 residues long: Putative agmatine deiminase (363 aa).

The segment covering 1 to 10 (MTKQLSTSPK) has biased composition (polar residues). Residues 1 to 20 (MTKQLSTSPKQDGFRMPAEH) form a disordered region. Residue Cys-355 is the Amidino-cysteine intermediate of the active site.

Belongs to the agmatine deiminase family.

The enzyme catalyses agmatine + H2O = N-carbamoylputrescine + NH4(+). This chain is Putative agmatine deiminase, found in Photobacterium profundum (strain SS9).